The sequence spans 1436 residues: MAP kinase kinase kinase win1 (1436 aa).

Residues 56 to 85 (LELPNNGKEENHRRPSVARSSSDRSKASAK) are disordered. Residues 76-85 (SSDRSKASAK) show a composition bias toward basic and acidic residues. Ser-224 carries the post-translational modification Phosphoserine. Residue Thr-226 is modified to Phosphothreonine. The interval 282–1123 (EDSDLDSETS…SNITIRWQQG (842 aa)) is interaction with tea4. The Protein kinase domain maps to 1120–1406 (WQQGGLIGSG…AAELLMDPWV (287 aa)). Residues 1126-1134 (IGSGSFGTV) and Lys-1149 contribute to the ATP site. Asp-1244 serves as the catalytic Proton acceptor.

It belongs to the protein kinase superfamily. STE Ser/Thr protein kinase family. MAP kinase kinase kinase subfamily. Interacts with tea4.

It catalyses the reaction L-seryl-[protein] + ATP = O-phospho-L-seryl-[protein] + ADP + H(+). The catalysed reaction is L-threonyl-[protein] + ATP = O-phospho-L-threonyl-[protein] + ADP + H(+). In terms of biological role, involved in a signal transduction pathway that is activated by changes in the osmolarity of the extracellular environment. Activates the wis1 MAP kinase kinase by phosphorylation. The polypeptide is MAP kinase kinase kinase win1 (win1) (Schizosaccharomyces pombe (strain 972 / ATCC 24843) (Fission yeast)).